We begin with the raw amino-acid sequence, 295 residues long: Acetylglutamate kinase (295 aa).

Substrate contacts are provided by residues 66-67, Arg88, and Asn193; that span reads GG.

It belongs to the acetylglutamate kinase family. ArgB subfamily.

The protein resides in the cytoplasm. The catalysed reaction is N-acetyl-L-glutamate + ATP = N-acetyl-L-glutamyl 5-phosphate + ADP. Its pathway is amino-acid biosynthesis; L-arginine biosynthesis; N(2)-acetyl-L-ornithine from L-glutamate: step 2/4. Functionally, catalyzes the ATP-dependent phosphorylation of N-acetyl-L-glutamate. The protein is Acetylglutamate kinase of Gluconobacter oxydans (strain 621H) (Gluconobacter suboxydans).